The primary structure comprises 391 residues: NADH-quinone oxidoreductase subunit D (391 aa).

The protein belongs to the complex I 49 kDa subunit family. NDH-1 is composed of 14 different subunits. Subunits NuoB, C, D, E, F, and G constitute the peripheral sector of the complex.

The protein resides in the cell inner membrane. It carries out the reaction a quinone + NADH + 5 H(+)(in) = a quinol + NAD(+) + 4 H(+)(out). In terms of biological role, NDH-1 shuttles electrons from NADH, via FMN and iron-sulfur (Fe-S) centers, to quinones in the respiratory chain. The immediate electron acceptor for the enzyme in this species is believed to be ubiquinone. Couples the redox reaction to proton translocation (for every two electrons transferred, four hydrogen ions are translocated across the cytoplasmic membrane), and thus conserves the redox energy in a proton gradient. The protein is NADH-quinone oxidoreductase subunit D of Rickettsia massiliae (strain Mtu5).